Reading from the N-terminus, the 279-residue chain is H-2 class II histocompatibility antigen gamma chain (279 aa).

The interval methionine 1 to glutamate 23 is disordered. Residues methionine 1–arginine 29 lie on the Cytoplasmic side of the membrane. A Phosphoserine modification is found at serine 9. A helical; Signal-anchor for type II membrane protein transmembrane segment spans residues glycine 30–tyrosine 55. The Extracellular portion of the chain corresponds to glutamine 56–leucine 279. Residues asparagine 113 and asparagine 119 are each glycosylated (N-linked (GlcNAc...) asparagine). The 62-residue stretch at leucine 193–cysteine 254 folds into the Thyroglobulin type-1 domain. Cystine bridges form between cysteine 196-cysteine 215, cysteine 226-cysteine 233, and cysteine 235-cysteine 254. Serine 265 is a glycosylation site (O-linked (Xyl...) (chondroitin sulfate) serine).

In terms of assembly, nonamer composed of three alpha/beta/gamma heterotrimers. Interacts with CD44; this complex is essential for the MIF-induced signaling cascade that results in B cell survival. As to quaternary structure, interacts with the mature form of CTSL; the complex survive in neutral pH environment. In terms of tissue distribution, expressed in thymus and lymph noodes. Expressed by antigen-presenting cells (APCs). Expressed in thymus and lymph noodes.

Its subcellular location is the late endosome. It is found in the lysosome. The protein resides in the cell membrane. The protein localises to the endoplasmic reticulum membrane. It localises to the golgi apparatus. Its subcellular location is the trans-Golgi network. It is found in the endosome. The protein resides in the secreted. Its function is as follows. Plays a critical role in MHC class II antigen processing by stabilizing peptide-free class II alpha/beta heterodimers in a complex soon after their synthesis and directing transport of the complex from the endoplasmic reticulum to compartments where peptide loading of class II takes place. Enhance also the stimulation of T-cell responses through interaction with CD44. In terms of biological role, stabilizes the conformation of mature CTSL by binding to its active site and serving as a chaperone to help maintain a pool of mature enzyme in endocytic compartments and extracellular space of antigen-presenting cells (APCs). Binds to the peptide-binding site of MHC class II alpha/beta heterodimers forming an alpha-beta-CLIP complex, thereby preventing the loading of antigenic peptides to the MHC class II complex until its release by HLA-DM in the endosome. In Mus musculus (Mouse), this protein is H-2 class II histocompatibility antigen gamma chain.